The chain runs to 293 residues: Meteorin (293 aa).

Residues 1–23 (MGFPAAALLCALCCGLLAPAARA) form the signal peptide. Intrachain disulfides connect Cys-30/Cys-51, Cys-82/Cys-118, Cys-171/Cys-242, Cys-174/Cys-266, and Cys-184/Cys-288.

This sequence belongs to the meteorin family. Monomer.

Its subcellular location is the secreted. Its function is as follows. Involved in both glial cell differentiation and axonal network formation during neurogenesis. Promotes astrocyte differentiation and transforms cerebellar astrocytes into radial glia. Also induces axonal extension in small and intermediate neurons of sensory ganglia by activating nearby satellite glia. The polypeptide is Meteorin (METRN) (Homo sapiens (Human)).